The sequence spans 228 residues: Urease accessory protein UreE (228 aa).

The disordered stretch occupies residues 193-228 (HGSGLHIHGIHSHGDGHSHSHDDHDHDHNHDHDHKH). Basic and acidic residues predominate over residues 204 to 228 (SHGDGHSHSHDDHDHDHNHDHDHKH).

This sequence belongs to the UreE family.

It localises to the cytoplasm. Involved in urease metallocenter assembly. Binds nickel. Probably functions as a nickel donor during metallocenter assembly. The sequence is that of Urease accessory protein UreE from Yersinia rohdei.